The sequence spans 309 residues: Porphobilinogen deaminase (309 aa).

An S-(dipyrrolylmethanemethyl)cysteine modification is found at Cys-243.

This sequence belongs to the HMBS family. As to quaternary structure, monomer. Dipyrromethane is required as a cofactor.

It catalyses the reaction 4 porphobilinogen + H2O = hydroxymethylbilane + 4 NH4(+). Its pathway is porphyrin-containing compound metabolism; protoporphyrin-IX biosynthesis; coproporphyrinogen-III from 5-aminolevulinate: step 2/4. Its function is as follows. Tetrapolymerization of the monopyrrole PBG into the hydroxymethylbilane pre-uroporphyrinogen in several discrete steps. The chain is Porphobilinogen deaminase (hemC) from Deinococcus radiodurans (strain ATCC 13939 / DSM 20539 / JCM 16871 / CCUG 27074 / LMG 4051 / NBRC 15346 / NCIMB 9279 / VKM B-1422 / R1).